Consider the following 51-residue polypeptide: Large ribosomal subunit protein eL39 (51 aa).

It belongs to the eukaryotic ribosomal protein eL39 family. As to quaternary structure, interacts with impact.

The sequence is that of Large ribosomal subunit protein eL39 (rpl39) from Ictalurus punctatus (Channel catfish).